The following is a 190-amino-acid chain: dCTP deaminase, dUMP-forming (190 aa).

Residues 101–106 (KSSLGR), Asp-119, 127–129 (TLE), Gln-148, Tyr-162, and Gln-174 contribute to the dCTP site. Glu-129 serves as the catalytic Proton donor/acceptor. The segment at 163-190 (GSTRVGSKYQGQRGPTPSRSYQNFITST) is disordered. Residues 171-190 (YQGQRGPTPSRSYQNFITST) are compositionally biased toward polar residues.

The protein belongs to the dCTP deaminase family. Homotrimer.

The enzyme catalyses dCTP + 2 H2O = dUMP + NH4(+) + diphosphate. The protein operates within pyrimidine metabolism; dUMP biosynthesis; dUMP from dCTP: step 1/1. Bifunctional enzyme that catalyzes both the deamination of dCTP to dUTP and the hydrolysis of dUTP to dUMP without releasing the toxic dUTP intermediate. The protein is dCTP deaminase, dUMP-forming of Mycolicibacterium paratuberculosis (strain ATCC BAA-968 / K-10) (Mycobacterium paratuberculosis).